Reading from the N-terminus, the 397-residue chain is Succinate--CoA ligase [ADP-forming] subunit beta (397 aa).

One can recognise an ATP-grasp domain in the interval 9 to 244 (KEIMKQYGIS…LTEEDPREVQ (236 aa)). Residues Lys-46, 53 to 55 (GRG), Glu-99, Leu-102, and Glu-107 contribute to the ATP site. Positions 199 and 213 each coordinate Mg(2+). Residues Asn-264 and 321–323 (GIM) contribute to the substrate site.

It belongs to the succinate/malate CoA ligase beta subunit family. Heterotetramer of two alpha and two beta subunits. It depends on Mg(2+) as a cofactor.

The enzyme catalyses succinate + ATP + CoA = succinyl-CoA + ADP + phosphate. It carries out the reaction GTP + succinate + CoA = succinyl-CoA + GDP + phosphate. Its pathway is carbohydrate metabolism; tricarboxylic acid cycle; succinate from succinyl-CoA (ligase route): step 1/1. Functionally, succinyl-CoA synthetase functions in the citric acid cycle (TCA), coupling the hydrolysis of succinyl-CoA to the synthesis of either ATP or GTP and thus represents the only step of substrate-level phosphorylation in the TCA. The beta subunit provides nucleotide specificity of the enzyme and binds the substrate succinate, while the binding sites for coenzyme A and phosphate are found in the alpha subunit. The protein is Succinate--CoA ligase [ADP-forming] subunit beta of Alkaliphilus metalliredigens (strain QYMF).